A 185-amino-acid polypeptide reads, in one-letter code: Tumor necrosis factor receptor superfamily member 17 (185 aa).

Residues 1–49 (MAQQCFHSEYFDSLLHACKPCHLRCSNPPATCQPYCDPSVTSSVKGTYT) are Extracellular-facing. The stretch at 4–36 (QCFHSEYFDSLLHACKPCHLRCSNPPATCQPYC) is one TNFR-Cys repeat. 3 disulfides stabilise this stretch: cysteine 5–cysteine 18, cysteine 21–cysteine 32, and cysteine 25–cysteine 36. The helical; Signal-anchor for type III membrane protein transmembrane segment at 50–70 (VLWIFLGLTLVLSLALFTISF) threads the bilayer. At 71 to 185 (LLRKMNPEAL…MGMEKPTHTR (115 aa)) the chain is on the cytoplasmic side.

As to quaternary structure, associates with TRAF1, TRAF2, TRAF3, TRAF5 and TRAF6. In terms of tissue distribution, detected in spleen, thymus, bone marrow and heart, and at lower levels in kidney and lung.

It is found in the membrane. Receptor for TNFSF13B/BLyS/BAFF and TNFSF13/APRIL. Promotes B-cell survival and plays a role in the regulation of humoral immunity. Activates NF-kappa-B and JNK. This chain is Tumor necrosis factor receptor superfamily member 17 (Tnfrsf17), found in Mus musculus (Mouse).